Reading from the N-terminus, the 837-residue chain is Protein translocase subunit SecA (837 aa).

ATP is bound by residues Gln-85, 103–107, and Asp-493; that span reads GEGKT. The Zn(2+) site is built by Cys-821, Cys-823, Cys-832, and His-833.

It belongs to the SecA family. As to quaternary structure, monomer and homodimer. Part of the essential Sec protein translocation apparatus which comprises SecA, SecYEG and auxiliary proteins SecDF. Other proteins may also be involved. It depends on Zn(2+) as a cofactor.

The protein resides in the cell membrane. The protein localises to the cytoplasm. It catalyses the reaction ATP + H2O + cellular proteinSide 1 = ADP + phosphate + cellular proteinSide 2.. In terms of biological role, part of the Sec protein translocase complex. Interacts with the SecYEG preprotein conducting channel. Has a central role in coupling the hydrolysis of ATP to the transfer of proteins into and across the cell membrane, serving as an ATP-driven molecular motor driving the stepwise translocation of polypeptide chains across the membrane. This is Protein translocase subunit SecA from Streptococcus pneumoniae serotype 19F (strain G54).